A 52-amino-acid chain; its full sequence is Insulin (52 aa).

Cystine bridges form between Cys-9-Cys-38, Cys-21-Cys-51, and Cys-37-Cys-42.

It belongs to the insulin family. In terms of assembly, heterodimer of a B chain and an A chain linked by two disulfide bonds.

The protein resides in the secreted. Insulin decreases blood glucose concentration. It increases cell permeability to monosaccharides, amino acids and fatty acids. It accelerates glycolysis, the pentose phosphate cycle, and glycogen synthesis in liver. In Piaractus mesopotamicus (Small-scaled pacu), this protein is Insulin (ins).